Reading from the N-terminus, the 663-residue chain is MDSHVLAFPIPDPSTPPPEEASLYASKCDYYESDIYSQIRRLTEEKCIETEKELPVNIKLHVKHKGMSISSSRNELVVTVSGNYKNVYTAKIKILQAIPKILISKLVLEEPLENLLFDEDGYVYEDTMKHLDKITEITGAKIYIMHRSMCHDIDFQLRTDSGFSNRLNEQQSFYQRHLESTRHEFSCQKNAENSFFIVFYGDYCSVEHARIRVLALMDEIRGLSVVAIATSVSFQPILVGKAFSSTAGMKATESINIYTLPFCSDSIPRLQTLPALNSSKIIITGEEEKLQRLEEAFYYAEEHLKLFTHVTEISFVKLFEFLAYEMDELRLIMEENSSFIRFPEYFKEGGETSPENSKVKIYSSSIANSEKTALRLAKLASKYVQGKTQFGVEDNEDFLRVAGSWRRASTIEKGVSSSELSSIVSSTGSIVETNGIGEKMSFSPLKKLSIPPTEFVAQIAIICMASGVEMLLKTNGIEYFGQENTVPIAMDKASKIFYKFGQSQWHQILLEAPTKDQDFISGKKNGKLDKVKQQCRFNLKNGDILFCPQSTSIFTVDIYSDELERVIKGMNTMLLEFPAEMHFYVPEEIHKKLIGFRGEQIQRVTKLYNSYIEFSTTPFDCYGHNVLIRTPSKFSENLWAVRSLFIKTAEGLGYDIPKYLFAN.

The KH domain occupies 578 to 644 (PAEMHFYVPE…SENLWAVRSL (67 aa)).

The protein localises to the cytoplasm. The protein resides in the nucleus. It is found in the cytoskeleton. It localises to the microtubule organizing center. Its subcellular location is the spindle pole body. Functionally, has a role in meiosis. In Schizosaccharomyces pombe (strain 972 / ATCC 24843) (Fission yeast), this protein is Meiotically up-regulated gene 60 protein (mug60).